Here is a 406-residue protein sequence, read N- to C-terminus: 5-cytosine rRNA methyltransferase NSUN4 (406 aa).

Positions 207, 208, 209, 226, 231, 259, 260, and 277 each coordinate S-adenosyl-L-methionine. Cys332 acts as the Nucleophile in catalysis.

Belongs to the class I-like SAM-binding methyltransferase superfamily. RsmB/NOP family.

It is found in the mitochondrion. The enzyme catalyses a cytidine in rRNA + S-adenosyl-L-methionine = a 5-methylcytidine in rRNA + S-adenosyl-L-homocysteine + H(+). It catalyses the reaction a cytidine in mRNA + S-adenosyl-L-methionine = a 5-methylcytidine in mRNA + S-adenosyl-L-homocysteine + H(+). In terms of biological role, involved in mitochondrial ribosome large subunit biogenesis. Functionally, mitochondrial RNA cytosine C(5)-methyltransferase that methylates cytosine to 5-methylcytosine (m5C) in various RNAs, such as rRNAs, mRNAs and some long non-coding RNAs (lncRNAs). Involved in mitochondrial ribosome small subunit (SSU) maturation by catalyzing methylation of mitochondrial 12S rRNA. In Xenopus tropicalis (Western clawed frog), this protein is 5-cytosine rRNA methyltransferase NSUN4 (nsun4).